A 505-amino-acid polypeptide reads, in one-letter code: uncharacterized protein (505 aa).

Residues 11–27 (IGIIGGGIVGWLAAIAL) form a helical membrane-spanning segment.

Its subcellular location is the membrane. This is an uncharacterized protein from Sinorhizobium fredii (strain NBRC 101917 / NGR234).